Here is a 605-residue protein sequence, read N- to C-terminus: Aspartate--tRNA(Asp/Asn) ligase (605 aa).

Glu-183 serves as a coordination point for L-aspartate. An aspartate region spans residues 207–210; the sequence is QLFK. Arg-229 provides a ligand contact to L-aspartate. Residues 229–231 and Gln-238 each bind ATP; that span reads RDE. His-457 contacts L-aspartate. Residue Glu-497 participates in ATP binding. Arg-504 lines the L-aspartate pocket. Residue 549–552 participates in ATP binding; it reads GLDR.

It belongs to the class-II aminoacyl-tRNA synthetase family. Type 1 subfamily. Homodimer.

It is found in the cytoplasm. It carries out the reaction tRNA(Asx) + L-aspartate + ATP = L-aspartyl-tRNA(Asx) + AMP + diphosphate. In terms of biological role, aspartyl-tRNA synthetase with relaxed tRNA specificity since it is able to aspartylate not only its cognate tRNA(Asp) but also tRNA(Asn). Reaction proceeds in two steps: L-aspartate is first activated by ATP to form Asp-AMP and then transferred to the acceptor end of tRNA(Asp/Asn). The chain is Aspartate--tRNA(Asp/Asn) ligase from Persephonella marina (strain DSM 14350 / EX-H1).